The primary structure comprises 247 residues: NAD-dependent protein deacetylase (247 aa).

One can recognise a Deacetylase sirtuin-type domain in the interval 1-244; sequence MIYEKVAEEL…PKILENVRQK (244 aa). NAD(+) contacts are provided by Ala-22, Thr-26, Phe-33, Arg-34, Gln-98, Ile-100, Asp-101, and His-116. Phe-33 contacts nicotinamide. Ile-100 and Asp-101 together coordinate nicotinamide. His-116 acts as the Proton acceptor in catalysis. Zn(2+) is bound by residues Cys-124, Cys-127, Cys-149, and Cys-151. Positions 187, 188, 212, and 230 each coordinate NAD(+).

It belongs to the sirtuin family. Class U subfamily. As to quaternary structure, monomer. The cofactor is Zn(2+).

It is found in the cytoplasm. It catalyses the reaction N(6)-acetyl-L-lysyl-[protein] + NAD(+) + H2O = 2''-O-acetyl-ADP-D-ribose + nicotinamide + L-lysyl-[protein]. In terms of biological role, NAD-dependent protein deacetylase which modulates the activities of several enzymes which are inactive in their acetylated form. Deacetylates the N-terminal lysine residue of albA1, the major archaeal DNA compaction protein and that, in turn, increases albA1's DNA binding affinity, thereby repressing transcription. The sequence is that of NAD-dependent protein deacetylase from Saccharolobus solfataricus (strain ATCC 35092 / DSM 1617 / JCM 11322 / P2) (Sulfolobus solfataricus).